The primary structure comprises 499 residues: Glycerol kinase (499 aa).

Thr13 contributes to the ADP binding site. Residues Thr13, Thr14, and Ser15 each coordinate ATP. Thr13 is a binding site for sn-glycerol 3-phosphate. Position 17 (Arg17) interacts with ADP. Sn-glycerol 3-phosphate is bound by residues Arg83, Glu84, Tyr135, and Asp245. Residues Arg83, Glu84, Tyr135, Asp245, and Gln246 each coordinate glycerol. Residues Thr267 and Gly310 each contribute to the ADP site. The ATP site is built by Thr267, Gly310, Gln314, and Gly411. Gly411 and Asn415 together coordinate ADP.

Belongs to the FGGY kinase family.

It carries out the reaction glycerol + ATP = sn-glycerol 3-phosphate + ADP + H(+). It functions in the pathway polyol metabolism; glycerol degradation via glycerol kinase pathway; sn-glycerol 3-phosphate from glycerol: step 1/1. Inhibited by fructose 1,6-bisphosphate (FBP). Its function is as follows. Key enzyme in the regulation of glycerol uptake and metabolism. Catalyzes the phosphorylation of glycerol to yield sn-glycerol 3-phosphate. This Stenotrophomonas maltophilia (strain K279a) protein is Glycerol kinase.